Reading from the N-terminus, the 473-residue chain is MAIHPLDVVIMAAGKGTRMKSSLPKVLHRLGGRALLAHVLDCAAQLSARQAVVITGHGAMEVEAACARRTGASADLSLKFVRQEPQLGTGHAVQQALPVLPDDGITLVLSGDVPLTQAATLQALLAQCDGQRLALLTLSMADPAGYGRIVRAGTQASAQVRAIVEHKDASEAERAIHEIYSGIMAVPTRLLRRWLARLDNDNVQNEYYLTDIVKFAVADGVAVVAHQITDAAQVAGVNSPVQLAELERVYQQRLATTLMEQGVRLADPARLDVRGQLTCGQDVEIDVNCVFDGRVSLGQGVRIGANCVIANAAIAAGAVIHPFTHIDGEKLGVQVGEGAMVGPFARLRPGANLGAEVHIGNFVEVKNSTLARGAKANHLAYLGDATVGERVNYGAGSITANYDGANKHRTVIEADVHIGSNCVLVAPVTIGAGATVGGGSTITRDVPAGALSVGRGRQVSIANWARPVKKPGV.

The segment at 1-240 is pyrophosphorylase; it reads MAIHPLDVVI…AAQVAGVNSP (240 aa). UDP-N-acetyl-alpha-D-glucosamine contacts are provided by residues K25, Q83, 88–89, 110–112, G147, E165, and N238; these read GT and SGD. A Mg(2+)-binding site is contributed by D112. Residue N238 coordinates Mg(2+). Positions 241–261 are linker; it reads VQLAELERVYQQRLATTLMEQ. The segment at 262–473 is N-acetyltransferase; it reads GVRLADPARL…WARPVKKPGV (212 aa). UDP-N-acetyl-alpha-D-glucosamine is bound by residues R348 and K366. The Proton acceptor role is filled by H378. UDP-N-acetyl-alpha-D-glucosamine contacts are provided by Y381 and N392. Residues A395, 401 to 402, S420, G438, and R455 contribute to the acetyl-CoA site; that span reads NY.

This sequence in the N-terminal section; belongs to the N-acetylglucosamine-1-phosphate uridyltransferase family. It in the C-terminal section; belongs to the transferase hexapeptide repeat family. Homotrimer. Mg(2+) is required as a cofactor.

It localises to the cytoplasm. The catalysed reaction is alpha-D-glucosamine 1-phosphate + acetyl-CoA = N-acetyl-alpha-D-glucosamine 1-phosphate + CoA + H(+). It carries out the reaction N-acetyl-alpha-D-glucosamine 1-phosphate + UTP + H(+) = UDP-N-acetyl-alpha-D-glucosamine + diphosphate. It participates in nucleotide-sugar biosynthesis; UDP-N-acetyl-alpha-D-glucosamine biosynthesis; N-acetyl-alpha-D-glucosamine 1-phosphate from alpha-D-glucosamine 6-phosphate (route II): step 2/2. The protein operates within nucleotide-sugar biosynthesis; UDP-N-acetyl-alpha-D-glucosamine biosynthesis; UDP-N-acetyl-alpha-D-glucosamine from N-acetyl-alpha-D-glucosamine 1-phosphate: step 1/1. It functions in the pathway bacterial outer membrane biogenesis; LPS lipid A biosynthesis. Catalyzes the last two sequential reactions in the de novo biosynthetic pathway for UDP-N-acetylglucosamine (UDP-GlcNAc). The C-terminal domain catalyzes the transfer of acetyl group from acetyl coenzyme A to glucosamine-1-phosphate (GlcN-1-P) to produce N-acetylglucosamine-1-phosphate (GlcNAc-1-P), which is converted into UDP-GlcNAc by the transfer of uridine 5-monophosphate (from uridine 5-triphosphate), a reaction catalyzed by the N-terminal domain. This is Bifunctional protein GlmU from Polaromonas naphthalenivorans (strain CJ2).